The following is a 684-amino-acid chain: Protein ecdysoneless (684 aa).

Residues 491 to 501 (EPELDSDDDEP) show a composition bias toward acidic residues. 2 disordered regions span residues 491-528 (EPEL…CQRN) and 603-624 (TSVG…EDDF).

Belongs to the ECD family. Expressed in the ecdysone-producing larval ring gland, nervous system, imaginal disks and gonads.

It localises to the cytoplasm. Its function is as follows. Required in both the follicle cells and the germline for oocyte development. In Drosophila melanogaster (Fruit fly), this protein is Protein ecdysoneless.